We begin with the raw amino-acid sequence, 215 residues long: UPF0502 protein YceH (215 aa).

Belongs to the UPF0502 family.

The polypeptide is UPF0502 protein YceH (Salmonella schwarzengrund (strain CVM19633)).